The primary structure comprises 237 residues: Concanavalin V (237 aa).

Mn(2+) contacts are provided by Glu-8 and Asp-10. Asp-10, Tyr-12, Asn-14, and Asp-19 together coordinate Ca(2+). Residue Asn-14 coordinates a carbohydrate. Mn(2+)-binding residues include Asp-19 and His-24. Residues Gly-70, 98-100, Asp-208, and Arg-228 each bind a carbohydrate; that span reads GLY.

Belongs to the leguminous lectin family. As to quaternary structure, homotetramer. Concanavalin A-like lectins of the Diocleinae subtribe undergo proteolytic processing referred to as circular permutation. The propeptide is split into an N-terminal and a C-terminal part, the gamma and beta chain, respectively. These are then religated in beta-gamma order to form the mature alpha chain. The beta and gamma chains can often be detected in cell extracts. Residues 1-118 of the mature chain, as displayed here, probably constitute the beta chain in the propeptide, residues 119-237 the gamma chain.

In terms of biological role, D-mannose/D-glucose-binding lectin which binds alpha-methyl-D-mannoside, D-mannose and D-glucose in that order. Also binds to serum fetuin and ovalbumin. Has hemagglutinating activity towards rabbit erythrocytes. Is not toxic towards larvae of the brine shrimp Artemia. Induces relaxation in rat endothelized aorta. Shows a transient edematogenic effect in rat. The polypeptide is Concanavalin V (Canavalia cathartica (Jackbean)).